The chain runs to 218 residues: Superoxide dismutase [Mn] 2, mitochondrial (218 aa).

A mitochondrion-targeting transit peptide spans 1 to 24; it reads MLQSTARTASKLVQPVAGVLAVRS. 4 residues coordinate Mn(2+): His50, His98, Asp179, and His183.

The protein belongs to the iron/manganese superoxide dismutase family. As to quaternary structure, homotetramer. The cofactor is Mn(2+). As to expression, expressed in pharynx and rectum. Upon thermal stress, expressed in vulva, body wall muscles and hypodermis.

It is found in the mitochondrion. The catalysed reaction is 2 superoxide + 2 H(+) = H2O2 + O2. Its function is as follows. Destroys superoxide anion radicals which are normally produced within the cells and which are toxic to biological systems. This chain is Superoxide dismutase [Mn] 2, mitochondrial (sod-3), found in Caenorhabditis elegans.